The sequence spans 206 residues: ATP-dependent Clp protease proteolytic subunit 2 (206 aa).

Ser-100 functions as the Nucleophile in the catalytic mechanism. Residue His-125 is part of the active site.

It belongs to the peptidase S14 family. Fourteen ClpP subunits assemble into 2 heptameric rings which stack back to back to give a disk-like structure with a central cavity, resembling the structure of eukaryotic proteasomes.

The protein resides in the cytoplasm. The catalysed reaction is Hydrolysis of proteins to small peptides in the presence of ATP and magnesium. alpha-casein is the usual test substrate. In the absence of ATP, only oligopeptides shorter than five residues are hydrolyzed (such as succinyl-Leu-Tyr-|-NHMec, and Leu-Tyr-Leu-|-Tyr-Trp, in which cleavage of the -Tyr-|-Leu- and -Tyr-|-Trp bonds also occurs).. In terms of biological role, cleaves peptides in various proteins in a process that requires ATP hydrolysis. Has a chymotrypsin-like activity. Plays a major role in the degradation of misfolded proteins. The chain is ATP-dependent Clp protease proteolytic subunit 2 from Myxococcus xanthus.